The following is a 414-amino-acid chain: Ribulose bisphosphate carboxylase/oxygenase activase (414 aa).

Residue 37 to 44 participates in ATP binding; sequence GRKGEGKT. Residues 296–326 are disordered; the sequence is RGYQTAPPPEAPVIQPVNNSSHKQKTSNTHL. Residues 311 to 326 are compositionally biased toward polar residues; the sequence is PVNNSSHKQKTSNTHL.

This sequence belongs to the RuBisCO activase family.

Its function is as follows. Activation of RuBisCO (ribulose-1,5-bisohosphate carboxylase/oxygenase; EC 4.1.1.39) involves the ATP-dependent carboxylation of the epsilon-amino group of lysine leading to a carbamate structure. The polypeptide is Ribulose bisphosphate carboxylase/oxygenase activase (rca) (Nostoc sp. (strain PCC 7120 / SAG 25.82 / UTEX 2576)).